The sequence spans 988 residues: DNA polymerase (988 aa).

It belongs to the DNA polymerase type-B family. Interacts with A20. Component of the Uracil-DNA glycosylase(UDG)-A20-polymerase complex; A20 and UDG form a heterodimeric processivity factor that associates with E9 to form the processive polymerase holoenzyme.

It carries out the reaction DNA(n) + a 2'-deoxyribonucleoside 5'-triphosphate = DNA(n+1) + diphosphate. Catalyzes DNA synthesis. Acquires processivity by associating with a heterodimeric processivity factor comprised of the viral A20 and D4 proteins, thereby forming the DNA polymerase holoenzyme. Displays 3'- to 5' exonuclease activity. Might participate in viral DNA recombination. Does not perform translesion synthesis across an abasic site. The polypeptide is DNA polymerase (POL) (Vertebrata (FPV)).